The primary structure comprises 229 residues: Large ribosomal subunit protein uL1 (229 aa).

Belongs to the universal ribosomal protein uL1 family. In terms of assembly, part of the 50S ribosomal subunit.

Binds directly to 23S rRNA. The L1 stalk is quite mobile in the ribosome, and is involved in E site tRNA release. In terms of biological role, protein L1 is also a translational repressor protein, it controls the translation of the L11 operon by binding to its mRNA. This Streptococcus equi subsp. zooepidemicus (strain MGCS10565) protein is Large ribosomal subunit protein uL1.